Reading from the N-terminus, the 94-residue chain is Small ribosomal subunit protein uS19 (94 aa).

This sequence belongs to the universal ribosomal protein uS19 family.

Protein S19 forms a complex with S13 that binds strongly to the 16S ribosomal RNA. This Endomicrobium trichonymphae protein is Small ribosomal subunit protein uS19.